A 274-amino-acid polypeptide reads, in one-letter code: Large ribosomal subunit protein uL2c (274 aa).

The interval 230-252 is disordered; the sequence is HPHGGGEGRSPIGRSKPLTPWGK.

This sequence belongs to the universal ribosomal protein uL2 family. As to quaternary structure, part of the 50S ribosomal subunit.

It localises to the plastid. The protein is Large ribosomal subunit protein uL2c (rpl2) of Euglena longa (Euglenophycean alga).